A 242-amino-acid polypeptide reads, in one-letter code: Zinc finger protein ZOP1 (242 aa).

The Matrin-type zinc-finger motif lies at 11–42 (KWCEFCKIWIQNNPTSIRNHDLGKRHRECVDK). Residues 42–71 (KKLTDMRERSAAKDKELKKNEKLLQQIEAK) are a coiled coil. A disordered region spans residues 154–242 (VKKPVSSSGA…PLLGLYNRPF (89 aa)). Positions 155 to 172 (KKPVSSSGAGPSVGKPPG) are enriched in low complexity. Positions 201–233 (RQDEKPKKVSAEEKAALKAREAARKRVEDREKP) are enriched in basic and acidic residues.

As to quaternary structure, component of a pre-mRNA splicing complex. Interacts with STA1. Interacts with PRP31.

The protein localises to the nucleus. Its subcellular location is the cajal body. Nucleic acid-binding protein that promotes Pol IV-dependent small interfering RNA (siRNA) accumulation, DNA methylation and transcriptional silencing. May possess both RNA-directed DNA methylation (RdDM)-dependent and -independent roles in transcriptional silencing. Acts as a pre-mRNA splicing factor that associates with several typical components of the splicing machinery as well as with Pol II. The chain is Zinc finger protein ZOP1 from Arabidopsis thaliana (Mouse-ear cress).